A 156-amino-acid chain; its full sequence is MNRIEAHLLATDLKFAIISTRWNHLIVDRLVEGAELAFVQHGGRSENLDHYLSPGAYEVPLIARKLAESGRYDAIVCLGAVIKGDTDHYDFVAGGAANGILNTSLHTGVPVAFGVLTTDTVEQALNRAGIKAGNKGAEATLAMIETVNLLRQIPQS.

5-amino-6-(D-ribitylamino)uracil-binding positions include tryptophan 22, 56–58, and 80–82; these read AYE and AVI. Residue 85-86 coordinates (2S)-2-hydroxy-3-oxobutyl phosphate; sequence DT. The active-site Proton donor is the histidine 88. 5-amino-6-(D-ribitylamino)uracil is bound at residue phenylalanine 113. (2S)-2-hydroxy-3-oxobutyl phosphate is bound at residue arginine 127.

This sequence belongs to the DMRL synthase family.

The enzyme catalyses (2S)-2-hydroxy-3-oxobutyl phosphate + 5-amino-6-(D-ribitylamino)uracil = 6,7-dimethyl-8-(1-D-ribityl)lumazine + phosphate + 2 H2O + H(+). Its pathway is cofactor biosynthesis; riboflavin biosynthesis; riboflavin from 2-hydroxy-3-oxobutyl phosphate and 5-amino-6-(D-ribitylamino)uracil: step 1/2. Its function is as follows. Catalyzes the formation of 6,7-dimethyl-8-ribityllumazine by condensation of 5-amino-6-(D-ribitylamino)uracil with 3,4-dihydroxy-2-butanone 4-phosphate. This is the penultimate step in the biosynthesis of riboflavin. The sequence is that of 6,7-dimethyl-8-ribityllumazine synthase from Deinococcus deserti (strain DSM 17065 / CIP 109153 / LMG 22923 / VCD115).